A 158-amino-acid polypeptide reads, in one-letter code: MARFDDPKQRPYKLPDLCTELNTSLQDVSIACVYCKATLERTEVYQFAFKDLCIVYRDCIAYAACHKCIDFYSRIRELRYYSNSVYGETLEKITNTELYNLLIRCLRCQKPLNPAEKRRHLKDKRRFHSIAGQYRGQCNTCCDQARQERLRRRRETQV.

Zinc fingers lie at residues 32-68 (CVYC…CHKC) and 105-141 (CLRC…CNTC). Positions 156-158 (TQV) match the PDZ-binding domain motif.

This sequence belongs to the papillomaviridae E6 protein family. Forms homodimers. Interacts with ubiquitin-protein ligase UBE3A/E6-AP and thus forms a complex with human TP53. Interacts with human NFX1 and MAGI3. Interacts with human IRF3; this interaction inhibits the establishment of antiviral state. Interacts with human TYK2; this interaction inhibits JAK-STAT activation by interferon alpha. Interacts with host DLG1; this interaction leads to the proteasomal degradation of DLG1.

Its subcellular location is the host cytoplasm. It localises to the host nucleus. Its function is as follows. This protein has transforming activity in vitro. In terms of biological role, plays a major role in the induction and maintenance of cellular transformation. Acts mainly as an oncoprotein by stimulating the destruction of many host cell key regulatory proteins. E6 associates with host UBE3A/E6-AP ubiquitin-protein ligase, and inactivates tumor suppressors TP53 and TP73 by targeting them to the 26S proteasome for degradation. In turn, DNA damage and chromosomal instabilities increase and lead to cell proliferation and cancer development. The complex E6/E6AP targets several other substrates to degradation via the proteasome including host DLG1 or NFX1, a repressor of human telomerase reverse transcriptase (hTERT). The resulting increased expression of hTERT prevents the shortening of telomere length leading to cell immortalization. Other cellular targets including BAK1, Fas-associated death domain-containing protein (FADD) and procaspase 8, are degraded by E6/E6AP causing inhibition of apoptosis. E6 also inhibits immune response by interacting with host IRF3 and TYK2. These interactions prevent IRF3 transcriptional activities and inhibit TYK2-mediated JAK-STAT activation by interferon alpha resulting in inhibition of the interferon signaling pathway. The sequence is that of Protein E6 from Homo sapiens (Human).